The following is a 347-amino-acid chain: GMP reductase (347 aa).

Residue 108 to 131 (ADFEKTVQILALDPALNFVCIDVA) participates in NADP(+) binding. Residues glycine 181 and glycine 183 each contribute to the K(+) site. Cysteine 186 (thioimidate intermediate) is an active-site residue. Residue 216 to 239 (IVSDGGCTMPGDVAKAFGGGADFV) participates in NADP(+) binding.

This sequence belongs to the IMPDH/GMPR family. GuaC type 1 subfamily. In terms of assembly, homotetramer.

The enzyme catalyses IMP + NH4(+) + NADP(+) = GMP + NADPH + 2 H(+). Its function is as follows. Catalyzes the irreversible NADPH-dependent deamination of GMP to IMP. It functions in the conversion of nucleobase, nucleoside and nucleotide derivatives of G to A nucleotides, and in maintaining the intracellular balance of A and G nucleotides. This Salmonella paratyphi B (strain ATCC BAA-1250 / SPB7) protein is GMP reductase.